Reading from the N-terminus, the 591-residue chain is Aspartate--tRNA(Asp/Asn) ligase (591 aa).

Position 175 (E175) interacts with L-aspartate. The segment at 199 to 202 is aspartate; that stretch reads QQFK. 2 residues coordinate L-aspartate: R221 and H453. Position 221–223 (221–223) interacts with ATP; the sequence is RDE. E486 is a binding site for ATP. Position 493 (R493) interacts with L-aspartate. Residue 538-541 coordinates ATP; sequence GIDR.

This sequence belongs to the class-II aminoacyl-tRNA synthetase family. Type 1 subfamily. Homodimer.

The protein localises to the cytoplasm. It catalyses the reaction tRNA(Asx) + L-aspartate + ATP = L-aspartyl-tRNA(Asx) + AMP + diphosphate. Aspartyl-tRNA synthetase with relaxed tRNA specificity since it is able to aspartylate not only its cognate tRNA(Asp) but also tRNA(Asn). Reaction proceeds in two steps: L-aspartate is first activated by ATP to form Asp-AMP and then transferred to the acceptor end of tRNA(Asp/Asn). The protein is Aspartate--tRNA(Asp/Asn) ligase of Roseobacter denitrificans (strain ATCC 33942 / OCh 114) (Erythrobacter sp. (strain OCh 114)).